We begin with the raw amino-acid sequence, 487 residues long: MTELFIDGAWVAGSGPVFASRNPGTDEIAWQGESASAADVDRAVASARRAFAGWSALDFESRCAIVKRFAALLNERKEAIAAAIGRETGKPLWEARTEVASMAAKVGISIQAYQERTGEKRQDMADGVAVLRHRPHGVVAVFGPYNFPGHLPNGHIVPALIAGNAVVFKPSELAPGVARATVEVWKEAGLPDGVLNLVQGEKDTGIALANHRQIDGLFFTGSSDTGTLLHKQFGGRPEIVLALEMGGNNPLVIGEVEDIDAAVHHTIQSAFLSAGQRCTCARRIFVPQGAFGDRFLARLTDVTSKITADVFDADPQPFMGAVISARAAAKLVDAQSRLIEQGAKPIIAMTQRDPRLGFVNAAIVDVTGVANLPDEEHFGPLAQIVRYATFDDAIERANDTAFGLSAGLLADDAKTWEHFRRTIRAGIVNWNRPTNGASSAAPFGGTGRSGNHRPSAYYAADYCAYPMASVESTQLTLPASLSPGLHF.

Residue 221–226 (GSSDTG) participates in NAD(+) binding. Active-site residues include glutamate 244 and cysteine 278.

It belongs to the aldehyde dehydrogenase family. AstD subfamily.

It catalyses the reaction N-succinyl-L-glutamate 5-semialdehyde + NAD(+) + H2O = N-succinyl-L-glutamate + NADH + 2 H(+). It functions in the pathway amino-acid degradation; L-arginine degradation via AST pathway; L-glutamate and succinate from L-arginine: step 4/5. In terms of biological role, catalyzes the NAD-dependent reduction of succinylglutamate semialdehyde into succinylglutamate. The chain is N-succinylglutamate 5-semialdehyde dehydrogenase from Burkholderia lata (strain ATCC 17760 / DSM 23089 / LMG 22485 / NCIMB 9086 / R18194 / 383).